A 131-amino-acid chain; its full sequence is Profilin-2 (131 aa).

It belongs to the profilin family. As to quaternary structure, occurs in many kinds of cells as a complex with monomeric actin in a 1:1 ratio.

Its subcellular location is the cytoplasm. The protein resides in the cytoskeleton. Functionally, binds to actin and affects the structure of the cytoskeleton. At high concentrations, profilin prevents the polymerization of actin, whereas it enhances it at low concentrations. By binding to PIP2, it inhibits the formation of IP3 and DG. This Lilium longiflorum (Trumpet lily) protein is Profilin-2.